The following is a 350-amino-acid chain: Twinfilin-1 (350 aa).

At S2 the chain carries N-acetylserine. Residues 2 to 139 form the ADF-H 1 domain; the sequence is SHQTGIQASE…SLHGYKKYLL (138 aa). S143 and S277 each carry phosphoserine. The 139-residue stretch at 175-313 folds into the ADF-H 2 domain; that stretch reads LQGVAFPISR…TADFLYDEVH (139 aa). Phosphotyrosine is present on Y309. Residues 317 to 350 are disordered; it reads HAHKQSFAKPKGPAGKRGIRRLIRGPAEAEATTD. Position 349 is a phosphothreonine (T349).

It belongs to the actin-binding proteins ADF family. Twinfilin subfamily. As to quaternary structure, interacts with G-actin; ADP-actin form and capping protein (CP). May also be able to interact with TWF2 and phosphoinositides, PI(4,5)P2. When bound to PI(4,5)P2, it is down-regulated. Interacts with ACTG1. Post-translationally, phosphorylated on serine and threonine residues. In terms of tissue distribution, widely expressed with highest levels in brain, liver and kidney. Also expressed in heart, lung and testis. Not detected in spleen or skeletal muscle.

It localises to the cytoplasm. It is found in the cytoskeleton. Actin-binding protein involved in motile and morphological processes. Inhibits actin polymerization, likely by sequestering G-actin. By capping the barbed ends of filaments, it also regulates motility. Seems to play an important role in clathrin-mediated endocytosis and distribution of endocytic organelles. This Mus musculus (Mouse) protein is Twinfilin-1 (Twf1).